The chain runs to 469 residues: Programmed cell death protein 4 (469 aa).

An N-acetylmethionine modification is found at Met-1. 2 disordered regions span residues 1 to 38 and 58 to 128; these read MDVE…EIKN and KAKR…GTPG. Phosphoserine is present on Ser-25. A Nuclear localization signal motif is present at residues 58-64; the sequence is KAKRRLR. Ser-67 carries the phosphoserine; by PKB and RPS6KB1 modification. Residues Ser-68, Ser-71, Ser-76, Ser-78, Ser-80, and Ser-94 each carry the phosphoserine modification. Residues 70-76 carry the Phosphodegron motif; it reads DSGRGDS. Over residues 74–83 the composition is skewed to low complexity; the sequence is GDSVSDSGSD. Positions 114-125 are enriched in gly residues; it reads KKGGAGGKGVWG. Tyr-152 carries the phosphotyrosine modification. Positions 163 to 284 constitute an MI 1 domain; the sequence is AFEKTLTPII…CNTYIDSYKG (122 aa). A Nuclear localization signal motif is present at residues 241–250; it reads DKLLKDLPEL. 2 positions are modified to phosphoserine: Ser-313 and Ser-317. In terms of domain architecture, MI 2 spans 326 to 449; that stretch reads HLVKEIDMLL…SKQLRDLCPS (124 aa). Residue Ser-457 is modified to Phosphoserine; by PKB.

It belongs to the PDCD4 family. As to quaternary structure, interacts (via MI domains) with EIF4A2. Interacts (via MI domains) with EIF4A1 (via N-terminal domain). Heterotrimer with EIF4A1; one molecule of PDCD4 binds two molecules of EIF4A1. Interacts with EIF4G1. May form a complex with EIF4A1 and EIF4G1. The interaction between PDCD4 and EIF4A1 interferes with the interaction between EIF4A1 and EIF4G. When phosphorylated, interacts with BTRC and FBXW11. Polyubiquitinated, leading to its proteasomal degradation. Rapidly degraded in response to mitogens. Phosphorylation of the phosphodegron promotes interaction with BTRC and proteasomal degradation. Post-translationally, phosphorylated at Ser-67 by RPS6KB1 in response to mitogens; phosphorylation promotes proteasomal degradation of PDCD4. Up-regulated in proliferative cells. Highly expressed in epithelial cells of the mammary gland. Reduced expression in lung cancer and colon carcinoma.

The protein resides in the nucleus. The protein localises to the cytoplasm. In terms of biological role, inhibits translation initiation and cap-dependent translation. May excert its function by hindering the interaction between EIF4A1 and EIF4G. Inhibits the helicase activity of EIF4A. Modulates the activation of JUN kinase. Down-regulates the expression of MAP4K1, thus inhibiting events important in driving invasion, namely, MAPK85 activation and consequent JUN-dependent transcription. May play a role in apoptosis. Tumor suppressor. Inhibits tumor promoter-induced neoplastic transformation. Binds RNA. This Homo sapiens (Human) protein is Programmed cell death protein 4 (PDCD4).